Reading from the N-terminus, the 586-residue chain is Probable transporter AQR1 (586 aa).

2 disordered regions span residues 1-44 and 61-82; these read MSRS…FEGA and EGDLDSETSSHSSDDKVDPTQQ. Residues 1–99 lie on the Extracellular side of the membrane; the sequence is MSRSNSIYTE…PYTLLSYGQK (99 aa). The span at 19 to 40 shows a compositional bias: basic and acidic residues; that stretch reads NEQHLTREYTKPDGQTKSEKLN. Residues 100–120 form a helical membrane-spanning segment; it reads WGMVAILTMCGFWSSLGSPIY. At 121–139 the chain is on the cytoplasmic side; the sequence is YPALRQLEKQFNVDENMVN. Residues 140–160 traverse the membrane as a helical segment; sequence VTVVVYLLFQGISPTVSGGLA. Residues 161-166 are Extracellular-facing; the sequence is DCFGRR. The helical transmembrane segment at 167–187 threads the bilayer; it reads PIILAGMLIYVIASIGLACAP. Position 188 (Ser188) is a topological domain, cytoplasmic. Residues 189-209 traverse the membrane as a helical segment; the sequence is YGVIIFLRCIQSIGISPTIAI. Residues 210–225 are Extracellular-facing; it reads SSGVVGDFTLKHERGT. Residues 226-246 traverse the membrane as a helical segment; the sequence is FVGATSGFVLLGQCFGSLIGA. Topologically, residues 247–255 are cytoplasmic; sequence VLTARWDWR. Residues 256–276 traverse the membrane as a helical segment; sequence AIFWFLTIGCGSCFLIAFLIL. The Extracellular segment spans residues 277-334; sequence PETKRTIAGNLSIKPKRFINRAPIFLLGPVRRRFKYDNPDYETLDPTIPKLDLSSAGK. Residues 335–355 traverse the membrane as a helical segment; sequence ILVLPEIILSLFPSGLLFAMW. The Cytoplasmic segment spans residues 356–374; it reads TLMLSSISSGLSVAPYNYH. Residues 375 to 395 form a helical membrane-spanning segment; that stretch reads LVIIGVCYLPGGIGGLMGSFF. The Extracellular segment spans residues 396–433; that stretch reads TGRIIDMYFKRKIKKFEQDKANGLIPQDAEINMFKVRL. Residues 434 to 454 traverse the membrane as a helical segment; that stretch reads VCLLPQNFLAVVAYLLFGWSI. Residues 455–459 lie on the Cytoplasmic side of the membrane; that stretch reads DKGWR. The helical transmembrane segment at 460-480 threads the bilayer; sequence IESILITSFVCSYCAMSTLST. Topologically, residues 481 to 523 are extracellular; it reads STTLLVDLYPTKSSTASSCFNFVRCSLSTIFMGCFAKMKAAMT. The helical transmembrane segment at 524–544 threads the bilayer; the sequence is VGGTFTFLCALVFFFNFLMFI. Topologically, residues 545 to 586 are cytoplasmic; it reads PMKYGMKWREDRLLKQQRQSWLNTLAVKAKKGTKRDQNDNHN.

This sequence belongs to the major facilitator superfamily. CAR1 family.

The protein localises to the membrane. In terms of biological role, probable transporter that confers resistance to short-chain monocarboxylic acids and quinidine. The protein is Probable transporter AQR1 (AQR1) of Saccharomyces cerevisiae (strain ATCC 204508 / S288c) (Baker's yeast).